Here is a 432-residue protein sequence, read N- to C-terminus: Guanine nucleotide-binding protein subunit alpha (432 aa).

The segment at M1–Q97 is disordered. G2 carries the N-myristoyl glycine lipid modification. Residue C4 is the site of S-palmitoyl cysteine attachment. Over residues P21 to A52 the composition is skewed to low complexity. Positions K111–L432 constitute a G-alpha domain. Residues K114–T127 are G1 motif. 14 residues coordinate GTP: E122, S123, G124, K125, S126, T127, D230, L255, T261, G283, N349, K350, D352, and A404. Residue S126 participates in Mg(2+) binding. Residues D253–T261 form a G2 motif region. T261 contributes to the Mg(2+) binding site. Positions I276–R285 are G3 motif. Residues I345–D352 are G4 motif. The segment at T402 to T407 is G5 motif.

The protein belongs to the G-alpha family. G proteins are composed of 3 units; alpha, beta and gamma. The alpha chain contains the guanine nucleotide binding site. The cofactor is Mg(2+).

Guanine nucleotide-binding proteins (G proteins) are involved as modulators or transducers in various transmembrane signaling systems. Involved in the mating pathway. The chain is Guanine nucleotide-binding protein subunit alpha (GPA1) from Cryptococcus neoformans var. neoformans serotype D (strain B-3501A) (Filobasidiella neoformans).